Reading from the N-terminus, the 158-residue chain is Endoribonuclease YbeY (158 aa).

His-118, His-122, and His-128 together coordinate Zn(2+).

This sequence belongs to the endoribonuclease YbeY family. The cofactor is Zn(2+).

It localises to the cytoplasm. Functionally, single strand-specific metallo-endoribonuclease involved in late-stage 70S ribosome quality control and in maturation of the 3' terminus of the 16S rRNA. This chain is Endoribonuclease YbeY, found in Bartonella henselae (strain ATCC 49882 / DSM 28221 / CCUG 30454 / Houston 1) (Rochalimaea henselae).